Consider the following 166-residue polypeptide: MALGLEDKKAIVAEVNEAAKGALSAVIADSRGVTVDKMTVLRKTAREAGVYMRVVRNTLLRRAVEGTEYECLNNAFTGPTLIAFSNEHPGAAARLFKEFAKANQKFEIKAGAFNGEFIAAAQIDRLATLPTYEEAIAKLMATMKEASAGKLVRTIAAVRDQKQAAA.

The protein belongs to the universal ribosomal protein uL10 family. In terms of assembly, part of the ribosomal stalk of the 50S ribosomal subunit. The N-terminus interacts with L11 and the large rRNA to form the base of the stalk. The C-terminus forms an elongated spine to which L12 dimers bind in a sequential fashion forming a multimeric L10(L12)X complex.

Its function is as follows. Forms part of the ribosomal stalk, playing a central role in the interaction of the ribosome with GTP-bound translation factors. This is Large ribosomal subunit protein uL10 from Aeromonas hydrophila subsp. hydrophila (strain ATCC 7966 / DSM 30187 / BCRC 13018 / CCUG 14551 / JCM 1027 / KCTC 2358 / NCIMB 9240 / NCTC 8049).